The chain runs to 236 residues: DNA repair protein RecO (236 aa).

Belongs to the RecO family.

Its function is as follows. Involved in DNA repair and RecF pathway recombination. The polypeptide is DNA repair protein RecO (Photobacterium profundum (strain SS9)).